The sequence spans 439 residues: D-inositol 3-phosphate glycosyltransferase (439 aa).

Position 21 (His21) interacts with 1D-myo-inositol 3-phosphate. Residues 27-28 and Gly35 contribute to the UDP-N-acetyl-alpha-D-glucosamine site; that span reads QP. 1D-myo-inositol 3-phosphate is bound by residues 32–37, Lys90, Tyr123, Thr147, and Arg167; that span reads DAGGMN. Residues Arg241, Lys246, and Gln299 each coordinate UDP-N-acetyl-alpha-D-glucosamine. Tyr308, Arg309, and Ala311 together coordinate Mg(2+). UDP-N-acetyl-alpha-D-glucosamine-binding residues include Glu321 and Glu329. Thr335 provides a ligand contact to Mg(2+).

It belongs to the glycosyltransferase group 1 family. MshA subfamily. Homodimer.

It catalyses the reaction 1D-myo-inositol 3-phosphate + UDP-N-acetyl-alpha-D-glucosamine = 1D-myo-inositol 2-acetamido-2-deoxy-alpha-D-glucopyranoside 3-phosphate + UDP + H(+). Its function is as follows. Catalyzes the transfer of a N-acetyl-glucosamine moiety to 1D-myo-inositol 3-phosphate to produce 1D-myo-inositol 2-acetamido-2-deoxy-glucopyranoside 3-phosphate in the mycothiol biosynthesis pathway. In Mycobacterium sp. (strain JLS), this protein is D-inositol 3-phosphate glycosyltransferase.